Reading from the N-terminus, the 552-residue chain is Terpene synthase 5 (552 aa).

Residues D307, D311, and E457 each contribute to the Mg(2+) site. A DDXXD motif motif is present at residues 307–311 (DDTYD).

This sequence belongs to the terpene synthase family. Mg(2+) serves as cofactor.

In terms of biological role, catalyzes the cyclization of farnesyl diphosphate to multiple sesquiterpenes, such as olefins and sesquiterpene alcohols. This chain is Terpene synthase 5 (TPS5), found in Ricinus communis (Castor bean).